The primary structure comprises 257 residues: Uxu operon transcriptional regulator (257 aa).

The HTH gntR-type domain occupies 8 to 76 (QRPYQEVGAM…RGAGIYVLDN (69 aa)). Residues 36–55 (EREIAEMLDVTRTVVREALI) constitute a DNA-binding region (H-T-H motif).

In terms of biological role, repressor for the uxuRBA operon. In Escherichia coli (strain K12), this protein is Uxu operon transcriptional regulator (uxuR).